We begin with the raw amino-acid sequence, 180 residues long: ATP synthase subunit delta, chloroplastic (180 aa).

This sequence belongs to the ATPase delta chain family. In terms of assembly, F-type ATPases have 2 components, F(1) - the catalytic core - and F(0) - the membrane proton channel. F(1) has five subunits: alpha(3), beta(3), gamma(1), delta(1), epsilon(1). CF(0) has four main subunits: a(1), b(1), b'(1) and c(10-14). The alpha and beta chains form an alternating ring which encloses part of the gamma chain. F(1) is attached to F(0) by a central stalk formed by the gamma and epsilon chains, while a peripheral stalk is formed by the delta, b and b' chains.

The protein localises to the plastid. The protein resides in the chloroplast thylakoid membrane. Its function is as follows. F(1)F(0) ATP synthase produces ATP from ADP in the presence of a proton or sodium gradient. F-type ATPases consist of two structural domains, F(1) containing the extramembraneous catalytic core and F(0) containing the membrane proton channel, linked together by a central stalk and a peripheral stalk. During catalysis, ATP synthesis in the catalytic domain of F(1) is coupled via a rotary mechanism of the central stalk subunits to proton translocation. In terms of biological role, this protein is part of the stalk that links CF(0) to CF(1). It either transmits conformational changes from CF(0) to CF(1) or is implicated in proton conduction. In Emiliania huxleyi (Coccolithophore), this protein is ATP synthase subunit delta, chloroplastic.